The chain runs to 347 residues: MDLQAQLEELKTKTLETLQSLTGNHTKELQDLRVAVLGKKGSLTELLKGLKDLSNDLRPVVGKQVNEVRDLLTKAFEEQAKIVEAAKIQAQLDAESIDVTLPGRQMTLGHRHVLTQTSEEIEDIFLGMGFQIVDGFEVEKDYYNFERMNLPKDHPARDMQDTFYITEEILLRTHTSPVQARTLDQHDFSKGPLKMVSPGRVFRRDTDDATHSHQFHQIEGLVVGKNISMGDLKGTLEMIIKKMFGDERSIRLRPSYFPFTEPSVEVDVSCFKCGGKGCNVCKKTGWIEILGAGMVHPSVLEMSGVDAKEYSGFAFGLGQERIAMLRYGINDIRGFYQGDQRFSEQFN.

Glu261 lines the Mg(2+) pocket.

Belongs to the class-II aminoacyl-tRNA synthetase family. Phe-tRNA synthetase alpha subunit type 1 subfamily. Tetramer of two alpha and two beta subunits. It depends on Mg(2+) as a cofactor.

The protein localises to the cytoplasm. It carries out the reaction tRNA(Phe) + L-phenylalanine + ATP = L-phenylalanyl-tRNA(Phe) + AMP + diphosphate + H(+). This Streptococcus pyogenes serotype M1 protein is Phenylalanine--tRNA ligase alpha subunit.